We begin with the raw amino-acid sequence, 4218 residues long: Protein Obscurin (4218 aa).

One can recognise an SH3 domain in the interval 3-71 (AVADIVFVSR…PIDILEFNPT (69 aa)). The region spanning 86 to 264 (RKLTILRELV…LSVPSRAYDN (179 aa)) is the DH domain. Residues 439-466 (SKETKERLQHEQQELLKLEQEAIELYKK) are a coiled coil. Disordered regions lie at residues 465 to 592 (KKQQ…SHSK), 684 to 703 (SLRDGDTAPAGGSPGRQQGY), 728 to 750 (SGANQHLQQSGPPPPPIPPNFTR), and 923 to 1010 (RYET…EDRP). 2 stretches are compositionally biased toward low complexity: residues 466 to 490 (KQQSSKSVSSKTESVEITSSQVKSS) and 505 to 517 (AQVKEVTPVKVVS). A compositionally biased stretch (basic and acidic residues) spans 578 to 592 (KEVRKEVPPSASHSK). Over residues 923-935 (RYETKTRDYDRGT) the composition is skewed to basic and acidic residues. Residues 936 to 948 (SYDSTVERSQYGI) show a composition bias toward polar residues. Composition is skewed to basic and acidic residues over residues 950–962 (SRRDRSSVDKVEA) and 972–986 (TESRAASRAESRAES). Residues 987–996 (RASYSVAESR) show a composition bias toward low complexity. 15 consecutive Ig-like C2-type domains span residues 1017-1103 (PVVV…TTVS), 1152-1298 (PRVK…AELS), 1313-1400 (PTLV…SSIN), 1504-1594 (PVIV…TQLL), 1599-1689 (PEFT…CVVT), 1694-1785 (PKVK…CKVA), 1815-1906 (PEIV…LSLS), 2018-2107 (PEIS…FNLA), 2113-2214 (PTFI…FKLA), 2220-2305 (PSFV…EKVA), 2318-2409 (PKFL…VEIV), 2415-2505 (PVFV…AKLY), 2519-2609 (PQFV…ANVR), 2614-2698 (PPVF…KDIT), and 2716-2792 (PPVF…SCRI). An intrachain disulfide couples Cys1199 to Cys1282. Cys2739 and Cys2790 are oxidised to a cystine. The region spanning 2832 to 2933 (APPPLSEGPI…TYRQKLVPDP (102 aa)) is the Fibronectin type-III 1 domain. Residues 3186–3440 (YDIGDELGRG…VKTALKHPWF (255 aa)) enclose the Protein kinase 1 domain. Residues Gly3198, Lys3215, Glu3260, Ala3262, Glu3266, Lys3310, and Asp3326 each contribute to the ATP site. The Ig-like C2-type 16 domain occupies 3654–3738 (PFFREKPQTI…ARNKVGQTVA (85 aa)). Residues 3750-3843 (APDSPEISAN…IPVSASTVGG (94 aa)) form the Fibronectin type-III 2 domain. The Protein kinase 2 domain occupies 3897 to 4151 (YSFISEIARG…TEDCLEHRWL (255 aa)).

Belongs to the protein kinase superfamily. CAMK Ser/Thr protein kinase family. In terms of assembly, interacts with myosin. May interact (via protein kinase domain 1) with ball. May interact (via protein kinase domain 1 or 2) with mask. May interact (via protein kinase domain 2) with Tm1/tropomyosin-1. As to expression, expressed in the thoracic muscles including the indirect flight muscles (IFM) (at protein level).

The protein localises to the cytoplasm. It is found in the myofibril. Its subcellular location is the sarcomere. It localises to the m line. Structural component of the muscle M line which is involved in assembly and organization of sarcomere. Required for the development and organization of indirect flight muscle sarcomeres by regulating the formation of M line and H zone and the correct assembly of thick and thin filaments in the sarcomere. Lacks serine/threonine-protein kinase activity. The chain is Protein Obscurin from Drosophila melanogaster (Fruit fly).